Consider the following 102-residue polypeptide: Co-chaperonin GroES (102 aa).

It belongs to the GroES chaperonin family. As to quaternary structure, heptamer of 7 subunits arranged in a ring. Interacts with the chaperonin GroEL.

The protein resides in the cytoplasm. In terms of biological role, together with the chaperonin GroEL, plays an essential role in assisting protein folding. The GroEL-GroES system forms a nano-cage that allows encapsulation of the non-native substrate proteins and provides a physical environment optimized to promote and accelerate protein folding. GroES binds to the apical surface of the GroEL ring, thereby capping the opening of the GroEL channel. The chain is Co-chaperonin GroES from Streptomyces coelicolor (strain ATCC BAA-471 / A3(2) / M145).